The sequence spans 95 residues: Aspartyl/glutamyl-tRNA(Asn/Gln) amidotransferase subunit C (95 aa).

The protein belongs to the GatC family. In terms of assembly, heterotrimer of A, B and C subunits.

It catalyses the reaction L-glutamyl-tRNA(Gln) + L-glutamine + ATP + H2O = L-glutaminyl-tRNA(Gln) + L-glutamate + ADP + phosphate + H(+). It carries out the reaction L-aspartyl-tRNA(Asn) + L-glutamine + ATP + H2O = L-asparaginyl-tRNA(Asn) + L-glutamate + ADP + phosphate + 2 H(+). Functionally, allows the formation of correctly charged Asn-tRNA(Asn) or Gln-tRNA(Gln) through the transamidation of misacylated Asp-tRNA(Asn) or Glu-tRNA(Gln) in organisms which lack either or both of asparaginyl-tRNA or glutaminyl-tRNA synthetases. The reaction takes place in the presence of glutamine and ATP through an activated phospho-Asp-tRNA(Asn) or phospho-Glu-tRNA(Gln). In Cereibacter sphaeroides (strain ATCC 17023 / DSM 158 / JCM 6121 / CCUG 31486 / LMG 2827 / NBRC 12203 / NCIMB 8253 / ATH 2.4.1.) (Rhodobacter sphaeroides), this protein is Aspartyl/glutamyl-tRNA(Asn/Gln) amidotransferase subunit C.